We begin with the raw amino-acid sequence, 389 residues long: GTPase Obg (389 aa).

The region spanning 1–159 is the Obg domain; the sequence is MKFVDEAVIR…RSLKLELMLL (159 aa). The interval 122–144 is disordered; the sequence is FHGLGNTRFKSSTNRAPRQKTLG. Positions 160 to 333 constitute an OBG-type G domain; sequence ADVGLLGMPN…LSLKLIDFIE (174 aa). Residues 166 to 173, 191 to 195, 213 to 216, 283 to 286, and 314 to 316 contribute to the GTP site; these read GMPNAGKS, FTTLV, DIPG, NKTD, and SAY. The Mg(2+) site is built by serine 173 and threonine 193.

This sequence belongs to the TRAFAC class OBG-HflX-like GTPase superfamily. OBG GTPase family. Monomer. Mg(2+) is required as a cofactor.

Its subcellular location is the cytoplasm. Functionally, an essential GTPase which binds GTP, GDP and possibly (p)ppGpp with moderate affinity, with high nucleotide exchange rates and a fairly low GTP hydrolysis rate. Plays a role in control of the cell cycle, stress response, ribosome biogenesis and in those bacteria that undergo differentiation, in morphogenesis control. This is GTPase Obg from Shewanella woodyi (strain ATCC 51908 / MS32).